The chain runs to 760 residues: DNA replication licensing factor mcm7 (760 aa).

The region spanning 353 to 559 (VYEKLAKSIA…ETDEHLAQHV (207 aa)) is the MCM domain. ATP-binding residues include Tyr-366, Gly-406, Ala-408, Lys-409, Ser-410, Asn-511, Arg-536, and Arg-630. The Arginine finger signature appears at 535–538 (SRFD).

Belongs to the MCM family. As to quaternary structure, component of the mcm2-7 complex. The complex forms a toroidal hexameric ring with the proposed subunit order mcm2-mcm6-mcm4-mcm7-mcm3-mcm5. The heterodimers of mcm4/mcm6 and mcm3/mcm5 interact with mcm2 and mcm7. Interacts with sld3 and mcm10.

The protein localises to the nucleus. The catalysed reaction is ATP + H2O = ADP + phosphate + H(+). Its function is as follows. Acts as a component of the MCM2-7 complex (MCM complex) which is the replicative helicase essential for 'once per cell cycle' DNA replication initiation and elongation in eukaryotic cells. Core component of CDC45-MCM-GINS (CMG) helicase, the molecular machine that unwinds template DNA during replication, and around which the replisome is built. The active ATPase sites in the MCM2-7 ring are formed through the interaction surfaces of two neighboring subunits such that a critical structure of a conserved arginine finger motif is provided in trans relative to the ATP-binding site of the Walker A box of the adjacent subunit. The six ATPase active sites, however, are likely to contribute differentially to the complex helicase activity. Required for the progression of S phase. In Schizosaccharomyces pombe (strain 972 / ATCC 24843) (Fission yeast), this protein is DNA replication licensing factor mcm7 (mcm7).